We begin with the raw amino-acid sequence, 231 residues long: Phycobilisome rod-core linker polypeptide cpcG (231 aa).

One can recognise a PBS-linker domain in the interval 11 to 191 (STQNQRVDGY…PRYGADFKEK (181 aa)).

It belongs to the phycobilisome linker protein family. The phycobilisome is a hemidiscoidal structure that is composed of two distinct substructures: a core complex and a number of rods radiating from the core.

It is found in the plastid. The protein localises to the chloroplast. Its subcellular location is the chloroplast thylakoid membrane. Its function is as follows. Rod-core linker protein required for attachment of phycocyanin to allophycocyanin in cores of phycobilisomes. In terms of biological role, linker polypeptides determine the state of aggregation and the location of the disk-shaped phycobiliprotein units within the phycobilisome and modulate their spectroscopic properties in order to mediate a directed and optimal energy transfer. The chain is Phycobilisome rod-core linker polypeptide cpcG (cpcG) from Porphyra purpurea (Red seaweed).